Reading from the N-terminus, the 372-residue chain is Trihelix transcription factor GT-4 (372 aa).

The 65-residue stretch at 47-111 (APKKRAETWA…MCTDKWRNIL (65 aa)) folds into the Myb-like domain. Residue S167 is modified to Phosphoserine.

Its subcellular location is the nucleus. Probable transcription factor that binds specific DNA sequence. The polypeptide is Trihelix transcription factor GT-4 (GT-4) (Arabidopsis thaliana (Mouse-ear cress)).